The chain runs to 779 residues: Kazrin (779 aa).

Residues 79 to 261 (AQVLLREEVV…LATLTKDVPK (183 aa)) are a coiled coil. The segment at 295 to 366 (QQTLYHSHPP…PGPVQKSLHN (72 aa)) is disordered. S356, S371, and S391 each carry phosphoserine. The interval 403 to 429 (KSLDPGLFDDSDSQCSPTRHSLSLSEG) is disordered. A compositionally biased stretch (polar residues) spans 415–426 (SQCSPTRHSLSL). SAM domains follow at residues 450-515 (WKAG…YRDA), 528-592 (DHHW…LYQV), and 616-683 (WTNQ…STIF). The segment at 685–779 (PSNSTGIRES…GYGSLEVTNV (95 aa)) is disordered. A compositionally biased stretch (basic and acidic residues) spans 736-746 (SSKEPDFHDDY).

It belongs to the kazrin family. In terms of tissue distribution, expressed in skin interfollicular epidermis and hair follicles. Expressed in tongue epithelium basal suprabasal layers.

The protein resides in the cell junction. The protein localises to the nucleus. It localises to the cytoplasm. It is found in the cytoskeleton. Component of the cornified envelope of keratinocytes. May be involved in the interplay between adherens junctions and desmosomes. The function in the nucleus is not known. This chain is Kazrin (Kazn), found in Mus musculus (Mouse).